The sequence spans 141 residues: NADH dehydrogenase [ubiquinone] 1 alpha subcomplex subunit 11 (141 aa).

The residue at position 2 (alanine 2) is an N-acetylalanine. 2 helical membrane passes run 22–43 (TYATTSIGGAAGLVVSAYSVAL) and 58–80 (RYTFTAAAIGAIFGLTSCISAQV).

In terms of assembly, complex I is composed of 45 different subunits.

It is found in the mitochondrion inner membrane. Functionally, accessory subunit of the mitochondrial membrane respiratory chain NADH dehydrogenase (Complex I), that is believed not to be involved in catalysis. Complex I functions in the transfer of electrons from NADH to the respiratory chain. The immediate electron acceptor for the enzyme is believed to be ubiquinone. The sequence is that of NADH dehydrogenase [ubiquinone] 1 alpha subcomplex subunit 11 (NDUFA11) from Bos taurus (Bovine).